The following is a 637-amino-acid chain: Phosphomethylpyrimidine synthase (637 aa).

Substrate-binding positions include Asn-242, Met-271, Tyr-300, His-336, 356–358 (SRG), 397–400 (DGLR), and Glu-436. His-440 is a binding site for Zn(2+). Tyr-463 is a substrate binding site. A Zn(2+)-binding site is contributed by His-504. Cys-584, Cys-587, and Cys-592 together coordinate [4Fe-4S] cluster.

Belongs to the ThiC family. Homodimer. [4Fe-4S] cluster serves as cofactor.

It catalyses the reaction 5-amino-1-(5-phospho-beta-D-ribosyl)imidazole + S-adenosyl-L-methionine = 4-amino-2-methyl-5-(phosphooxymethyl)pyrimidine + CO + 5'-deoxyadenosine + formate + L-methionine + 3 H(+). It functions in the pathway cofactor biosynthesis; thiamine diphosphate biosynthesis. Catalyzes the synthesis of the hydroxymethylpyrimidine phosphate (HMP-P) moiety of thiamine from aminoimidazole ribotide (AIR) in a radical S-adenosyl-L-methionine (SAM)-dependent reaction. In Bordetella bronchiseptica (strain ATCC BAA-588 / NCTC 13252 / RB50) (Alcaligenes bronchisepticus), this protein is Phosphomethylpyrimidine synthase.